Consider the following 799-residue polypeptide: Probable inorganic carbon transporter subunit DabA (799 aa).

Zn(2+) is bound by residues Cys303, Asp305, His479, and Cys494. The segment at Ala574–Ser598 is disordered.

This sequence belongs to the inorganic carbon transporter (TC 9.A.2) DabA family. In terms of assembly, forms a complex with DabB. Requires Zn(2+) as cofactor.

The protein resides in the cell membrane. Functionally, part of an energy-coupled inorganic carbon pump. The chain is Probable inorganic carbon transporter subunit DabA from Natronomonas pharaonis (strain ATCC 35678 / DSM 2160 / CIP 103997 / JCM 8858 / NBRC 14720 / NCIMB 2260 / Gabara) (Halobacterium pharaonis).